Reading from the N-terminus, the 274-residue chain is Large ribosomal subunit protein uL2c (274 aa).

Disordered stretches follow at residues 1-22 (MAIH…DNQV) and 225-274 (PVDH…RRSK).

It belongs to the universal ribosomal protein uL2 family. In terms of assembly, part of the 50S ribosomal subunit.

Its subcellular location is the plastid. The protein resides in the chloroplast. This chain is Large ribosomal subunit protein uL2c (rpl2), found in Silene latifolia (White campion).